The chain runs to 757 residues: UDP-N-acetylmuramoyl-L-alanyl-D-glutamate--2,6-diaminopimelate ligase MurE homolog, chloroplastic (757 aa).

Residues 1 to 11 (MATAPLAFHLP) are compositionally biased toward low complexity. A chloroplast-targeting transit peptide spans 1–53 (MATAPLAFHLPFPFPSASRPPPRLLPPSRRPPAARLAATRRFRPPTADDEPPE). Disordered stretches follow at residues 1-112 (MATA…DEFF), 126-152 (FTRRGLIKPSAPAPSQPEEEDGLADEL), and 172-195 (VSLADEEDEEANGGGGGVDYGDDG). Positions 12–30 (FPFPSASRPPPRLLPPSRR) are enriched in pro residues. 2 stretches are compositionally biased toward acidic residues: residues 47–56 (ADDEPPEAAE) and 142–152 (PEEEDGLADEL).

Belongs to the MurCDEF family. MurE subfamily. Component of the plastid-encoded plastid RNA polymerase (PEP) complex.

It localises to the plastid. The protein localises to the chloroplast. Required for the activity of the plastid-encoded RNA polymerase (PEP) and full expression of genes transcribed by PEP. In Oryza sativa subsp. japonica (Rice), this protein is UDP-N-acetylmuramoyl-L-alanyl-D-glutamate--2,6-diaminopimelate ligase MurE homolog, chloroplastic.